The chain runs to 230 residues: Nucleoside diphosphate kinase 2, chloroplastic (230 aa).

Residues 1 to 64 constitute a chloroplast transit peptide; it reads MEAMAVFSGS…SYPKTFRTRS (64 aa). Residues lysine 90, phenylalanine 138, arginine 166, threonine 172, arginine 183, and asparagine 193 each coordinate ATP. Catalysis depends on histidine 196, which acts as the Pros-phosphohistidine intermediate.

The protein belongs to the NDK family. It depends on Mg(2+) as a cofactor.

Its subcellular location is the plastid. It is found in the chloroplast. It catalyses the reaction a 2'-deoxyribonucleoside 5'-diphosphate + ATP = a 2'-deoxyribonucleoside 5'-triphosphate + ADP. The catalysed reaction is a ribonucleoside 5'-diphosphate + ATP = a ribonucleoside 5'-triphosphate + ADP. Functionally, major role in the synthesis of nucleoside triphosphates other than ATP. The ATP gamma phosphate is transferred to the NDP beta phosphate via a ping-pong mechanism, using a phosphorylated active-site intermediate. The sequence is that of Nucleoside diphosphate kinase 2, chloroplastic (NDPK2) from Pisum sativum (Garden pea).